A 311-amino-acid polypeptide reads, in one-letter code: Dermonecrotic toxin LlSicTox-alphaIII1i (311 aa).

The signal sequence occupies residues 1-21 (MYAHLALILGCWTVVLQGAET). Residues 22–26 (DVGER) constitute a propeptide that is removed on maturation. His-38 is an active-site residue. Residues Glu-58 and Asp-60 each coordinate Mg(2+). Catalysis depends on His-73, which acts as the Nucleophile. An intrachain disulfide couples Cys-77 to Cys-83. A Mg(2+)-binding site is contributed by Asp-117.

This sequence belongs to the arthropod phospholipase D family. Class I subfamily. Requires Mg(2+) as cofactor. As to expression, expressed by the venom gland.

Its subcellular location is the secreted. The enzyme catalyses an N-(acyl)-sphingosylphosphocholine = an N-(acyl)-sphingosyl-1,3-cyclic phosphate + choline. The catalysed reaction is an N-(acyl)-sphingosylphosphoethanolamine = an N-(acyl)-sphingosyl-1,3-cyclic phosphate + ethanolamine. It catalyses the reaction a 1-acyl-sn-glycero-3-phosphocholine = a 1-acyl-sn-glycero-2,3-cyclic phosphate + choline. It carries out the reaction a 1-acyl-sn-glycero-3-phosphoethanolamine = a 1-acyl-sn-glycero-2,3-cyclic phosphate + ethanolamine. In terms of biological role, dermonecrotic toxins cleave the phosphodiester linkage between the phosphate and headgroup of certain phospholipids (sphingolipid and lysolipid substrates), forming an alcohol (often choline) and a cyclic phosphate. This toxin acts on sphingomyelin (SM) with high activity. It also act on acyl- and alkyl-lysophosphatidylcholine (LPC), but not on sphingosylphosphorylcholine (SPC) and phosphatidylcholine (PC). It may also act on ceramide phosphoethanolamine (CPE), and lysophosphatidylethanolamine (LPE), but not on lysophosphatidylserine (LPS), and lysophosphatidylglycerol (LPG). It acts by transphosphatidylation, releasing exclusively cyclic phosphate products as second products. Induces complement-dependent hemolysis and dermonecrosis. Also induces increased vascular permeability, edema, inflammatory response, and platelet aggregation. The polypeptide is Dermonecrotic toxin LlSicTox-alphaIII1i (Loxosceles laeta (South American recluse spider)).